The sequence spans 488 residues: MNELRRLTITEMHDGLRRRNFSAVELVETHINAVENEQLNAFITKTPEIAIKAAKIADEHFLKQKDDIPPLMGIPVGVKDLFCTKGIKTTACSKMLENFIPTYESTVSNLLLKSGAAVLGKLNMDEFAMGSANTNSYFGPVENVWIRKSDGAKVVPGGSSGGSAASVAGFLCAGALGSDTGGSVRQPAAYCGVVGIKPTYGRCSRFGMIAFASSLDQAGVITRSVSDSALMLEIICGYDEKDSTSSKRTVPKFSSFINGDIKGKRIGIPKEYKMDGISDEIVHNWEKVSSNLKENGAEVVDITLPHTKYAIPVYYLICSAETSSNLARYDGVRYGFRVDADTLEEMYSLTRAEGFGKEVKRRILIGSYALSSGHYNEYYEKAQCIRALIRNDFIKAFEKIDYILVPSAPTEAFGLNEKPDPLIMCINDVFTVPASLAGLPAISVPVGLSNAGLPLALQVIGNYYDEAGILNMASVIEQNCGRIVNSLT.

Active-site charge relay system residues include Lys-79 and Ser-159. Ser-183 serves as the catalytic Acyl-ester intermediate.

This sequence belongs to the amidase family. GatA subfamily. As to quaternary structure, heterotrimer of A, B and C subunits.

The enzyme catalyses L-glutamyl-tRNA(Gln) + L-glutamine + ATP + H2O = L-glutaminyl-tRNA(Gln) + L-glutamate + ADP + phosphate + H(+). Allows the formation of correctly charged Gln-tRNA(Gln) through the transamidation of misacylated Glu-tRNA(Gln) in organisms which lack glutaminyl-tRNA synthetase. The reaction takes place in the presence of glutamine and ATP through an activated gamma-phospho-Glu-tRNA(Gln). This chain is Glutamyl-tRNA(Gln) amidotransferase subunit A, found in Wolbachia pipientis subsp. Culex pipiens (strain wPip).